The following is a 402-amino-acid chain: Pyridinium-3,5-bisthiocarboxylic acid mononucleotide nickel insertion protein (402 aa).

It belongs to the LarC family.

The catalysed reaction is Ni(II)-pyridinium-3,5-bisthiocarboxylate mononucleotide = pyridinium-3,5-bisthiocarboxylate mononucleotide + Ni(2+). Its function is as follows. Involved in the biosynthesis of a nickel-pincer cofactor ((SCS)Ni(II) pincer complex). Binds Ni(2+), and functions in nickel delivery to pyridinium-3,5-bisthiocarboxylic acid mononucleotide (P2TMN), to form the mature cofactor. Is thus probably required for the activation of nickel-pincer cofactor-dependent enzymes. The sequence is that of Pyridinium-3,5-bisthiocarboxylic acid mononucleotide nickel insertion protein from Desulfitobacterium hafniense (strain Y51).